The primary structure comprises 282 residues: Chlorite dismutase (282 aa).

Residues 1–31 form the signal peptide; sequence MTNLSIHNFKLSLVAAVIGSAMVMTSSPVAA. Ca(2+) is bound at residue glutamate 104. Heme is bound at residue histidine 204. Arginine 217 (proton acceptor) is an active-site residue. Positions 226 and 265 each coordinate Ca(2+).

This sequence belongs to the chlorite dismutase family. Homopentamer. Heme b is required as a cofactor.

Its subcellular location is the periplasm. It catalyses the reaction chloride + O2 = chlorite. Functionally, catalyzes the heme-dependent decomposition of chlorite to O(2) and chloride with high efficiency and specificity. Used to detoxify chlorite, a by-product of the reduction of perchlorate, a primarily anthropogenic pollutant, in perchlorate-respiring bacteria. The chain is Chlorite dismutase from Dechloromonas aromatica (strain RCB).